A 329-amino-acid polypeptide reads, in one-letter code: DNA-directed RNA polymerase subunit alpha (329 aa).

Residues 1 to 235 are alpha N-terminal domain (alpha-NTD); that stretch reads MLGSVTDFLK…EQLEAFVDLR (235 aa). The tract at residues 249-329 is alpha C-terminal domain (alpha-CTD); it reads FDPILLRPVD…NWPPASIADE (81 aa).

This sequence belongs to the RNA polymerase alpha chain family. Homodimer. The RNAP catalytic core consists of 2 alpha, 1 beta, 1 beta' and 1 omega subunit. When a sigma factor is associated with the core the holoenzyme is formed, which can initiate transcription.

The catalysed reaction is RNA(n) + a ribonucleoside 5'-triphosphate = RNA(n+1) + diphosphate. DNA-dependent RNA polymerase catalyzes the transcription of DNA into RNA using the four ribonucleoside triphosphates as substrates. This is DNA-directed RNA polymerase subunit alpha from Aeromonas hydrophila subsp. hydrophila (strain ATCC 7966 / DSM 30187 / BCRC 13018 / CCUG 14551 / JCM 1027 / KCTC 2358 / NCIMB 9240 / NCTC 8049).